A 488-amino-acid polypeptide reads, in one-letter code: Argininosuccinate lyase (488 aa).

It belongs to the lyase 1 family. Argininosuccinate lyase subfamily.

It localises to the cytoplasm. It carries out the reaction 2-(N(omega)-L-arginino)succinate = fumarate + L-arginine. Its pathway is amino-acid biosynthesis; L-arginine biosynthesis; L-arginine from L-ornithine and carbamoyl phosphate: step 3/3. In Corynebacterium jeikeium (strain K411), this protein is Argininosuccinate lyase.